The chain runs to 86 residues: Small ribosomal subunit protein bS18c (86 aa).

This sequence belongs to the bacterial ribosomal protein bS18 family. Part of the 30S ribosomal subunit.

The protein localises to the plastid. The protein resides in the chloroplast. This Larix laricina (Tamarack) protein is Small ribosomal subunit protein bS18c.